Consider the following 553-residue polypeptide: Solute carrier family 22 member 12 (553 aa).

The chain crosses the membrane as a helical span at residues 9 to 29 (LVGGLGRFQVLQTMALMVSIM). N-linked (GlcNAc...) asparagine glycans are attached at residues Asn56 and Asn102. 11 consecutive transmembrane segments (helical) span residues 146–166 (PMAQ…CGPA), 174–194 (LVLT…AFAP), 195–215 (AFPV…GVMM), 232–252 (LVMT…AAVA), 260–280 (LLQL…WWLA), 351–371 (CIST…ALDL), 378–398 (IFLL…GALL), 407–427 (PTLA…TLVP), 435–455 (SALA…ITIY), 466–486 (MTAV…GPLV), and 495–515 (WLPL…ALLL). The residue at position 542 (Thr542) is a Phosphothreonine.

It belongs to the major facilitator (TC 2.A.1) superfamily. Organic cation transporter (TC 2.A.1.19) family. Interacts with PDZK1. In terms of processing, N-glycosylated. In terms of tissue distribution, detected in kidney (at protein level). Detected in fetal and adult kidney. Detected in epithelial cells of proximal tubules in renal cortex.

It is found in the apical cell membrane. The catalysed reaction is urate(out) + (S)-lactate(in) = urate(in) + (S)-lactate(out). It carries out the reaction nicotinate(in) + urate(out) = nicotinate(out) + urate(in). It catalyses the reaction urate(out) + n chloride(in) = urate(in) + n chloride(out). The enzyme catalyses orotate(out) + nicotinate(in) = orotate(in) + nicotinate(out). In terms of biological role, electroneutral antiporter that translocates urate across the apical membrane of proximal tubular cells in exchange for monovalent organic or inorganic anions. Involved in renal reabsorption of urate and helps maintaining blood levels of uric acid. Mediates urate uptake by an exchange with organic anions such as (S)-lactate and nicotinate, and inorganic anion Cl(-). Other inorganic anions such as Br(-), I(-) and NO3(-) may also act as counteranions that exchange for urate. Also mediates orotate tubular uptake coupled with nicotinate efflux and to a lesser extent with lactate efflux, therefore displaying a potential role in orotate renal reabsorption. Orotate transport is Cl(-)-dependent. The polypeptide is Solute carrier family 22 member 12 (Homo sapiens (Human)).